Consider the following 257-residue polypeptide: 14-3-3-like protein GF14-G (257 aa).

The protein belongs to the 14-3-3 family.

In terms of biological role, is associated with a DNA binding complex that binds to the G box, a well-characterized cis-acting DNA regulatory element found in plant genes. This chain is 14-3-3-like protein GF14-G (GF14G), found in Oryza sativa subsp. japonica (Rice).